The primary structure comprises 356 residues: Outer membrane protein Omp38 (356 aa).

Residues 1 to 19 (MKLSRIALATMLVAAPLAA) form the signal peptide. The OmpA-like domain occupies 221 to 339 (ELTEDLNMEL…RVFATITGSR (119 aa)).

This sequence belongs to the outer membrane OOP (TC 1.B.6) superfamily. As to quaternary structure, homotrimer.

It is found in the cell outer membrane. Its function is as follows. Porin. Induces apoptosis in human cells through caspases-dependent and AIF-dependent pathways. Purified Omp38 enters the cells and localizes to the mitochondria, which leads to a release of proapoptotic molecules such as cytochrome c and AIF (apoptosis-inducing factor). The sequence is that of Outer membrane protein Omp38 (omp38) from Acinetobacter baumannii (strain ATCC 17978 / DSM 105126 / CIP 53.77 / LMG 1025 / NCDC KC755 / 5377).